A 906-amino-acid chain; its full sequence is Protein translocase subunit SecA (906 aa).

Residues Gln87, Gly105–Thr109, and Asp512 each bind ATP. A disordered region spans residues Arg879–Ser906. Positions 890, 892, 901, and 902 each coordinate Zn(2+).

It belongs to the SecA family. Monomer and homodimer. Part of the essential Sec protein translocation apparatus which comprises SecA, SecYEG and auxiliary proteins SecDF-YajC and YidC. Zn(2+) is required as a cofactor.

The protein resides in the cell inner membrane. Its subcellular location is the cytoplasm. The enzyme catalyses ATP + H2O + cellular proteinSide 1 = ADP + phosphate + cellular proteinSide 2.. Part of the Sec protein translocase complex. Interacts with the SecYEG preprotein conducting channel. Has a central role in coupling the hydrolysis of ATP to the transfer of proteins into and across the cell membrane, serving both as a receptor for the preprotein-SecB complex and as an ATP-driven molecular motor driving the stepwise translocation of polypeptide chains across the membrane. This Shewanella frigidimarina (strain NCIMB 400) protein is Protein translocase subunit SecA.